Consider the following 170-residue polypeptide: Phosphopantetheine adenylyltransferase (170 aa).

Thr10 is a binding site for substrate. ATP-binding positions include 10-11 (TF) and His18. Residues Lys42, Leu75, and Arg89 each contribute to the substrate site. Residues 90 to 92 (GVR), Glu100, and 125 to 131 (YTYVASS) each bind ATP.

It belongs to the bacterial CoaD family. As to quaternary structure, homohexamer. Mg(2+) is required as a cofactor.

It localises to the cytoplasm. The catalysed reaction is (R)-4'-phosphopantetheine + ATP + H(+) = 3'-dephospho-CoA + diphosphate. Its pathway is cofactor biosynthesis; coenzyme A biosynthesis; CoA from (R)-pantothenate: step 4/5. In terms of biological role, reversibly transfers an adenylyl group from ATP to 4'-phosphopantetheine, yielding dephospho-CoA (dPCoA) and pyrophosphate. This chain is Phosphopantetheine adenylyltransferase, found in Chlorobium limicola (strain DSM 245 / NBRC 103803 / 6330).